The primary structure comprises 163 residues: Phosphopantetheine adenylyltransferase (163 aa).

Residue S9 coordinates substrate. Residues 9–10 (SF) and H17 each bind ATP. 3 residues coordinate substrate: K41, L73, and K87. ATP is bound by residues 88–90 (GLR), E98, and 124–130 (YTYVSST).

Belongs to the bacterial CoaD family. Homohexamer. Mg(2+) is required as a cofactor.

It is found in the cytoplasm. It carries out the reaction (R)-4'-phosphopantetheine + ATP + H(+) = 3'-dephospho-CoA + diphosphate. Its pathway is cofactor biosynthesis; coenzyme A biosynthesis; CoA from (R)-pantothenate: step 4/5. Functionally, reversibly transfers an adenylyl group from ATP to 4'-phosphopantetheine, yielding dephospho-CoA (dPCoA) and pyrophosphate. The chain is Phosphopantetheine adenylyltransferase from Fusobacterium nucleatum subsp. nucleatum (strain ATCC 25586 / DSM 15643 / BCRC 10681 / CIP 101130 / JCM 8532 / KCTC 2640 / LMG 13131 / VPI 4355).